A 365-amino-acid chain; its full sequence is Protein YIM1 (365 aa).

It belongs to the YIM1 family.

The protein resides in the lipid droplet. Its subcellular location is the mitochondrion. This chain is Protein YIM1 (YIM1), found in Saccharomyces cerevisiae (strain ATCC 204508 / S288c) (Baker's yeast).